A 449-amino-acid chain; its full sequence is Deoxyguanosinetriphosphate triphosphohydrolase-like protein (449 aa).

Residues 1–27 (MTSSVWQERRHGEDKQRRNDHRSPYQR) form a disordered region. A compositionally biased stretch (basic and acidic residues) spans 7-27 (QERRHGEDKQRRNDHRSPYQR). The HD domain occupies 59–255 (RLTHSLEVSQ…MELADDIAYA (197 aa)).

The protein belongs to the dGTPase family. Type 2 subfamily.

In Shewanella baltica (strain OS185), this protein is Deoxyguanosinetriphosphate triphosphohydrolase-like protein.